The primary structure comprises 628 residues: ATP-dependent zinc metalloprotease FtsH (628 aa).

Residues 1-7 are Stromal-facing; it reads MKLSWKT. A helical transmembrane segment spans residues 8–28; that stretch reads LLLWSLPIFVVGFFFWQGFLG. Residues 29-118 are Lumenal-facing; the sequence is PTTTDVGSNI…AHPPKSTSAV (90 aa). A helical transmembrane segment spans residues 119 to 139; sequence WGLLGNLLFPLILVGGLAFLF. Residues 140-628 lie on the Stromal side of the membrane; it reads RRSNNASGGP…PEKNYYISQF (489 aa). 213–220 serves as a coordination point for ATP; the sequence is GPPGTGKT. Histidine 434 is a binding site for Zn(2+). Glutamate 435 is a catalytic residue. Residues histidine 438 and aspartate 512 each coordinate Zn(2+).

In the central section; belongs to the AAA ATPase family. It in the C-terminal section; belongs to the peptidase M41 family. In terms of assembly, homohexamer. Requires Zn(2+) as cofactor.

It is found in the plastid. Its subcellular location is the chloroplast thylakoid membrane. In terms of biological role, acts as a processive, ATP-dependent zinc metallopeptidase. The sequence is that of ATP-dependent zinc metalloprotease FtsH from Porphyra purpurea (Red seaweed).